The sequence spans 342 residues: 6-hydroxytryprostatin B O-methyltransferase (342 aa).

Residue D201 participates in S-adenosyl-L-methionine binding. H244 functions as the Proton acceptor in the catalytic mechanism.

Belongs to the class I-like SAM-binding methyltransferase superfamily. Cation-independent O-methyltransferase family. Homodimer.

The enzyme catalyses 6-hydroxytryprostatin B + S-adenosyl-L-methionine = tryprostatin A + S-adenosyl-L-homocysteine + H(+). It functions in the pathway alkaloid biosynthesis. Functionally, 6-hydroxytryprostatin B O-methyltransferase; part of the gene cluster that mediates the biosynthesis of fumitremorgins, indole alkaloids that carry not only intriguing chemical structures, but also interesting biological and pharmacological activities. The biosynthesis of fumitremorgin-type alkaloids begins by condensation of the two amino acids L-tryptophan and L-proline to brevianamide F, catalyzed by the non-ribosomal peptide synthetase ftmA. Brevianamide F is then prenylated by the prenyltransferase ftmPT1/ftmB in the presence of dimethylallyl diphosphate, resulting in the formation of tryprostatin B. The three cytochrome P450 monooxygenases, ftmP450-1/ftmC, ftmP450-2/ftmE and ftmP450-3/FtmG, are responsible for the conversion of tryprostatin B to 6-hydroxytryprostatin B, tryprostatin A to fumitremorgin C and fumitremorgin C to 12,13-dihydroxyfumitremorgin C, respectively. The putative methyltransferase ftmMT/ftmD is expected for the conversion of 6-hydroxytryprostatin B to tryprostatin A. FtmPT2/FtmH catalyzes the prenylation of 12,13-dihydroxyfumitre-morgin C in the presence of dimethylallyl diphosphate, resulting in the formation of fumitremorgin B. Fumitremorgin B is further converted to verruculogen by ftmOx1/ftmF via the insertion of an endoperoxide bond between the two prenyl moieties. In some fungal species, verruculogen is further converted to fumitremorgin A, but the enzymes involved in this step have not been identified yet. This chain is 6-hydroxytryprostatin B O-methyltransferase, found in Aspergillus fumigatus (Neosartorya fumigata).